We begin with the raw amino-acid sequence, 176 residues long: NAD(P)H-quinone oxidoreductase subunit 6, chloroplastic (176 aa).

Helical transmembrane passes span 10 to 30, 33 to 53, 61 to 81, 92 to 112, and 152 to 172; these read FLLVFLGLGLIVGGLGVVLLT, IYSAFSLGLVLVCISLFHIPA, AQLLIYVGAINVLIVFAVMFM, LWTVGDGVTSLVCTSIFVSLI, and FFLPFELISIILLVALIGAIA.

The protein belongs to the complex I subunit 6 family. As to quaternary structure, NDH is composed of at least 16 different subunits, 5 of which are encoded in the nucleus.

The protein resides in the plastid. It is found in the chloroplast thylakoid membrane. It carries out the reaction a plastoquinone + NADH + (n+1) H(+)(in) = a plastoquinol + NAD(+) + n H(+)(out). The enzyme catalyses a plastoquinone + NADPH + (n+1) H(+)(in) = a plastoquinol + NADP(+) + n H(+)(out). In terms of biological role, NDH shuttles electrons from NAD(P)H:plastoquinone, via FMN and iron-sulfur (Fe-S) centers, to quinones in the photosynthetic chain and possibly in a chloroplast respiratory chain. The immediate electron acceptor for the enzyme in this species is believed to be plastoquinone. Couples the redox reaction to proton translocation, and thus conserves the redox energy in a proton gradient. This is NAD(P)H-quinone oxidoreductase subunit 6, chloroplastic (ndhG) from Nandina domestica (Heavenly bamboo).